The chain runs to 105 residues: Small ribosomal subunit protein uS10 (105 aa).

The protein belongs to the universal ribosomal protein uS10 family. Part of the 30S ribosomal subunit.

Involved in the binding of tRNA to the ribosomes. The protein is Small ribosomal subunit protein uS10 of Trichormus variabilis (strain ATCC 29413 / PCC 7937) (Anabaena variabilis).